Reading from the N-terminus, the 145-residue chain is Deoxyuridine 5'-triphosphate nucleotidohydrolase (145 aa).

Belongs to the dUTPase family. The cofactor is Mg(2+).

It carries out the reaction dUTP + H2O = dUMP + diphosphate + H(+). Functionally, this enzyme is involved in nucleotide metabolism: it produces dUMP, the immediate precursor of thymidine nucleotides and it decreases the intracellular concentration of dUTP so that uracil cannot be incorporated into DNA. This Fowlpox virus (strain NVSL) (FPV) protein is Deoxyuridine 5'-triphosphate nucleotidohydrolase (DUT).